Consider the following 93-residue polypeptide: Small ribosomal subunit protein uS19 (93 aa).

This sequence belongs to the universal ribosomal protein uS19 family.

Functionally, protein S19 forms a complex with S13 that binds strongly to the 16S ribosomal RNA. This Mycobacterium leprae (strain TN) protein is Small ribosomal subunit protein uS19 (rpsS).